Reading from the N-terminus, the 600-residue chain is MNYYKTHTCNELRKNDVEKEVTLSGWMYRKRDHGNLIFVDLRDFYGITQLVFNNDKDFFCKISDLKPESVITVTGIVKARTEDTINISISTGEIEVTVNNLQIESEVEFHHNEETAKEERSILASIADDQEYPENMRFKYRFLDLRREKVRNNIVLRSQIIAELRKFMIEQGFLEIQTPILTASSPEGARDYLVPSRLNPGKFYALPQAPQIFKQLLMISGFDKYFQIAPCFRDEDARADRSPGEFYQLDLEMSFVTQEDVFQVIESTLYKVFAKFSRKSVDKGFSRITYKEAMLKYGSDKPDLRNPLLISDVTEIFRDSEFNIFKSNIERGMVVRAIPAPKTAEEPRSFFDKKIEHTQKEFGAKGLGYITFNKDGTAKGPIAKFLDDNRLNHIREATNIKPGDSVFFASDKENEAATIAGKVRTLLGSELGLIDNNIFKFCWVVDFPYFVYDDKSKKIDFFHNPFSMPHGGLKDLEEKNPLDILAYQYDLVCNGIELSSGAIRNNKLDIMYKAFATAGYNKEEVNKKFGALVRAFRFGVPPHGGIAPGIDRIVMLLADAPNIREITCFPMNQQGEDVLMDAPSKVDNKHLRELSLKVVE.

Residue E187 coordinates L-aspartate. An aspartate region spans residues Q211–K214. L-aspartate-binding residues include R233 and H463. ATP is bound at residue R233 to E235. An ATP-binding site is contributed by E497. Position 504 (R504) interacts with L-aspartate. G549 to R552 contributes to the ATP binding site.

Belongs to the class-II aminoacyl-tRNA synthetase family. Type 1 subfamily. As to quaternary structure, homodimer.

It is found in the cytoplasm. It carries out the reaction tRNA(Asx) + L-aspartate + ATP = L-aspartyl-tRNA(Asx) + AMP + diphosphate. In terms of biological role, aspartyl-tRNA synthetase with relaxed tRNA specificity since it is able to aspartylate not only its cognate tRNA(Asp) but also tRNA(Asn). Reaction proceeds in two steps: L-aspartate is first activated by ATP to form Asp-AMP and then transferred to the acceptor end of tRNA(Asp/Asn). The sequence is that of Aspartate--tRNA(Asp/Asn) ligase from Wolbachia sp. subsp. Brugia malayi (strain TRS).